Here is a 217-residue protein sequence, read N- to C-terminus: Putative thymidylate synthase (217 aa).

The active site involves Cys-139.

Belongs to the thymidylate synthase family. Archaeal-type ThyA subfamily. Monomer.

It localises to the cytoplasm. The protein operates within pyrimidine metabolism; dTTP biosynthesis. Its function is as follows. May catalyze the biosynthesis of dTMP using an unknown cosubstrate. This Methanococcoides burtonii (strain DSM 6242 / NBRC 107633 / OCM 468 / ACE-M) protein is Putative thymidylate synthase.